The following is a 198-amino-acid chain: Holliday junction resolvase RecU (198 aa).

The segment at 1–21 is disordered; sequence MVNYPHKLSSQKRQPSLSQPK. Over residues 11–21 the composition is skewed to polar residues; it reads QKRQPSLSQPK. Mg(2+) contacts are provided by Thr-81, Asp-83, Glu-96, and Gln-115.

This sequence belongs to the RecU family. Mg(2+) is required as a cofactor.

The protein localises to the cytoplasm. The catalysed reaction is Endonucleolytic cleavage at a junction such as a reciprocal single-stranded crossover between two homologous DNA duplexes (Holliday junction).. In terms of biological role, endonuclease that resolves Holliday junction intermediates in genetic recombination. Cleaves mobile four-strand junctions by introducing symmetrical nicks in paired strands. Promotes annealing of linear ssDNA with homologous dsDNA. Required for DNA repair, homologous recombination and chromosome segregation. This Streptococcus pneumoniae (strain Taiwan19F-14) protein is Holliday junction resolvase RecU.